Consider the following 147-residue polypeptide: 6-pyruvoyl tetrahydrobiopterin synthase (147 aa).

H26 is a Zn(2+) binding site. C45 serves as the catalytic Proton acceptor. Zn(2+) contacts are provided by H51 and H53. Active-site charge relay system residues include H92 and E136.

This sequence belongs to the PTPS family. Homohexamer formed of two homotrimers in a head to head fashion. Zn(2+) serves as cofactor.

The catalysed reaction is 7,8-dihydroneopterin 3'-triphosphate = 6-pyruvoyl-5,6,7,8-tetrahydropterin + triphosphate + H(+). The protein operates within cofactor biosynthesis; tetrahydrobiopterin biosynthesis; tetrahydrobiopterin from 7,8-dihydroneopterin triphosphate: step 1/3. In terms of biological role, involved in the biosynthesis of tetrahydrobiopterin, an essential cofactor of aromatic amino acid hydroxylases. Catalyzes the transformation of 7,8-dihydroneopterin triphosphate into 6-pyruvoyl tetrahydropterin. The protein is 6-pyruvoyl tetrahydrobiopterin synthase (pts) of Poecilia reticulata (Guppy).